Reading from the N-terminus, the 290-residue chain is Barley B recombinant-like protein C (290 aa).

Disordered stretches follow at residues 60–90 (PHHHHQPHHPRDCGTNANANGNGNGVGYGMM) and 102–183 (QPEP…RKNI). Over residues 104-116 (EPQPQLQHPPSPP) the composition is skewed to pro residues. Residues 138-158 (PPKKRQQGRQPKVLRPKKPKK) show a composition bias toward basic residues.

This sequence belongs to the BBR/BPC family.

Its subcellular location is the nucleus. Its function is as follows. Transcriptional regulator that specifically binds to GA-rich elements (GAGA-repeats) present in regulatory sequences of genes involved in developmental processes. This is Barley B recombinant-like protein C from Oryza sativa subsp. japonica (Rice).